Here is a 196-residue protein sequence, read N- to C-terminus: Aequorin-1 (196 aa).

Residues methionine 1–serine 7 constitute a propeptide that is removed on maturation. 4 consecutive EF-hand domains span residues lysine 18–asparagine 53, asparagine 54–glutamine 108, leucine 111–isoleucine 146, and glutamine 147–threonine 182. 5 residues coordinate Ca(2+): aspartate 31, asparagine 33, asparagine 35, arginine 37, and glutamate 42. 3 may interact with the chromophore regions span residues alanine 47 to alanine 57, alanine 62 to phenylalanine 72, and asparagine 107 to aspartate 117. Ca(2+)-binding residues include aspartate 124, aspartate 126, asparagine 128, glutamate 135, aspartate 160, aspartate 162, serine 164, glutamine 166, and glutamate 171.

It belongs to the aequorin family. In terms of processing, the reduction of the disulfide bond is necessary to regenerate aequorin from apoaequorin.

Ca(2+)-dependent bioluminescence photoprotein. Displays an emission peak at 470 nm (blue light). Trace amounts of calcium ion trigger the intramolecular oxidation of the chromophore, coelenterazine into coelenteramide and CO(2) with the concomitant emission of light. In Aequorea victoria (Water jellyfish), this protein is Aequorin-1.